An 88-amino-acid polypeptide reads, in one-letter code: UPF0297 protein BLi02868/BL02032 (88 aa).

This sequence belongs to the UPF0297 family.

The polypeptide is UPF0297 protein BLi02868/BL02032 (Bacillus licheniformis (strain ATCC 14580 / DSM 13 / JCM 2505 / CCUG 7422 / NBRC 12200 / NCIMB 9375 / NCTC 10341 / NRRL NRS-1264 / Gibson 46)).